An 87-amino-acid chain; its full sequence is Cell division topological specificity factor (87 aa).

The protein belongs to the MinE family.

In terms of biological role, prevents the cell division inhibition by proteins MinC and MinD at internal division sites while permitting inhibition at polar sites. This ensures cell division at the proper site by restricting the formation of a division septum at the midpoint of the long axis of the cell. In Acidiphilium cryptum (strain JF-5), this protein is Cell division topological specificity factor.